Consider the following 129-residue polypeptide: Lysozyme C, milk isozyme (129 aa).

In terms of domain architecture, C-type lysozyme spans 1–129; sequence KVFSKCELAH…LSEYLASCNL (129 aa). 4 disulfides stabilise this stretch: Cys-6-Cys-127, Cys-30-Cys-115, Cys-65-Cys-80, and Cys-76-Cys-94. Active-site residues include Glu-35 and Asp-53. The Ca(2+) site is built by Lys-82, Asp-85, Asn-87, Asp-90, and Asp-91.

It belongs to the glycosyl hydrolase 22 family. Monomer. Requires Ca(2+) as cofactor.

The enzyme catalyses Hydrolysis of (1-&gt;4)-beta-linkages between N-acetylmuramic acid and N-acetyl-D-glucosamine residues in a peptidoglycan and between N-acetyl-D-glucosamine residues in chitodextrins.. Functionally, lysozymes have primarily a bacteriolytic function; those in tissues and body fluids are associated with the monocyte-macrophage system and enhance the activity of immunoagents. The sequence is that of Lysozyme C, milk isozyme (LYZ) from Equus caballus (Horse).